The following is a 215-amino-acid chain: Large ribosomal subunit protein bL25 (215 aa).

The span at 1 to 10 (MAKSASNQLR) shows a compositional bias: polar residues. 2 disordered regions span residues 1 to 25 (MAKS…SRRA) and 187 to 215 (ELEG…GESE).

This sequence belongs to the bacterial ribosomal protein bL25 family. CTC subfamily. In terms of assembly, part of the 50S ribosomal subunit; part of the 5S rRNA/L5/L18/L25 subcomplex. Contacts the 5S rRNA. Binds to the 5S rRNA independently of L5 and L18.

Its function is as follows. This is one of the proteins that binds to the 5S RNA in the ribosome where it forms part of the central protuberance. This is Large ribosomal subunit protein bL25 from Mycobacterium bovis (strain ATCC BAA-935 / AF2122/97).